The primary structure comprises 164 residues: Protein SprT (164 aa).

The SprT-like domain occupies 14–156 (QQAETFFKRP…LCRRCREILV (143 aa)). H69 lines the Zn(2+) pocket. E70 is an active-site residue. H73 serves as a coordination point for Zn(2+).

Belongs to the SprT family. It depends on Zn(2+) as a cofactor.

It is found in the cytoplasm. In Pseudomonas entomophila (strain L48), this protein is Protein SprT.